The primary structure comprises 386 residues: Succinate--CoA ligase [ADP-forming] subunit beta (386 aa).

The ATP-grasp domain occupies 9–244; that stretch reads KEILRKYGVP…HDEEDPLETR (236 aa). ATP is bound by residues Lys-46, 53-55, Glu-99, Cys-102, and Glu-107; that span reads GRG. Residues Asn-199 and Asp-213 each coordinate Mg(2+). Substrate is bound by residues Asn-264 and 321–323; that span reads GIM.

Belongs to the succinate/malate CoA ligase beta subunit family. As to quaternary structure, heterotetramer of two alpha and two beta subunits. Mg(2+) is required as a cofactor.

The catalysed reaction is succinate + ATP + CoA = succinyl-CoA + ADP + phosphate. The enzyme catalyses GTP + succinate + CoA = succinyl-CoA + GDP + phosphate. It functions in the pathway carbohydrate metabolism; tricarboxylic acid cycle; succinate from succinyl-CoA (ligase route): step 1/1. Succinyl-CoA synthetase functions in the citric acid cycle (TCA), coupling the hydrolysis of succinyl-CoA to the synthesis of either ATP or GTP and thus represents the only step of substrate-level phosphorylation in the TCA. The beta subunit provides nucleotide specificity of the enzyme and binds the substrate succinate, while the binding sites for coenzyme A and phosphate are found in the alpha subunit. In Rickettsia typhi (strain ATCC VR-144 / Wilmington), this protein is Succinate--CoA ligase [ADP-forming] subunit beta.